Consider the following 299-residue polypeptide: Probable 4-deoxy-4-formamido-L-arabinose-phosphoundecaprenol deformylase ArnD (299 aa).

A NodB homology domain is found at Ile-2–Val-263.

The protein belongs to the polysaccharide deacetylase family. ArnD deformylase subfamily.

The enzyme catalyses 4-deoxy-4-formamido-alpha-L-arabinopyranosyl di-trans,octa-cis-undecaprenyl phosphate + H2O = 4-amino-4-deoxy-alpha-L-arabinopyranosyl di-trans,octa-cis-undecaprenyl phosphate + formate. Its pathway is glycolipid biosynthesis; 4-amino-4-deoxy-alpha-L-arabinose undecaprenyl phosphate biosynthesis; 4-amino-4-deoxy-alpha-L-arabinose undecaprenyl phosphate from UDP-4-deoxy-4-formamido-beta-L-arabinose and undecaprenyl phosphate: step 2/2. It functions in the pathway bacterial outer membrane biogenesis; lipopolysaccharide biosynthesis. Functionally, catalyzes the deformylation of 4-deoxy-4-formamido-L-arabinose-phosphoundecaprenol to 4-amino-4-deoxy-L-arabinose-phosphoundecaprenol. The modified arabinose is attached to lipid A and is required for resistance to polymyxin and cationic antimicrobial peptides. This is Probable 4-deoxy-4-formamido-L-arabinose-phosphoundecaprenol deformylase ArnD from Aeromonas salmonicida (strain A449).